The chain runs to 226 residues: Isoprenyl transferase (226 aa).

The active site involves D12. D12 lines the Mg(2+) pocket. Residues 13–16 (GNAR), W17, K25, H29, and 57–59 (SFE) contribute to the substrate site. N60 (proton acceptor) is an active-site residue. Residues W61, R63, R174, and 180-182 (RIS) each bind substrate. E193 contacts Mg(2+).

It belongs to the UPP synthase family. As to quaternary structure, homodimer. Mg(2+) is required as a cofactor.

Functionally, catalyzes the condensation of isopentenyl diphosphate (IPP) with allylic pyrophosphates generating different type of terpenoids. The sequence is that of Isoprenyl transferase from Rickettsia prowazekii (strain Madrid E).